The chain runs to 412 residues: Argininosuccinate synthase (412 aa).

10–18 (AYSGGLDTS) lines the ATP pocket. Y89 is a binding site for L-citrulline. G119 contributes to the ATP binding site. 3 residues coordinate L-aspartate: T121, N125, and D126. N125 contacts L-citrulline. L-citrulline is bound by residues R129, S177, E261, and Y273.

This sequence belongs to the argininosuccinate synthase family. Type 1 subfamily. In terms of assembly, homotetramer.

The protein localises to the cytoplasm. It catalyses the reaction L-citrulline + L-aspartate + ATP = 2-(N(omega)-L-arginino)succinate + AMP + diphosphate + H(+). It participates in amino-acid biosynthesis; L-arginine biosynthesis; L-arginine from L-ornithine and carbamoyl phosphate: step 2/3. This Bifidobacterium longum (strain DJO10A) protein is Argininosuccinate synthase.